The sequence spans 36 residues: Beta-amanitin proprotein (36 aa).

Positions 1–10 are excised as a propeptide; sequence MSDINATRLP. The segment at residues 11-18 is a cross-link (cyclopeptide (Ile-Pro)); it reads IWGIGCDP. Residues 12–16 constitute a cross-link (2'-cysteinyl-6'-hydroxytryptophan sulfoxide (Trp-Cys)); it reads WGIGC. The propeptide occupies 19–36; that stretch reads CIGDDVTALLTRGEASLC.

This sequence belongs to the MSDIN fungal toxin family. Post-translationally, processed by the macrocyclase-peptidase enzyme POPB to yield a toxic cyclic decapeptide. POPB first removes 10 residues from the N-terminus. Conformational trapping of the remaining peptide forces the enzyme to release this intermediate rather than proceed to macrocyclization. The enzyme rebinds the remaining peptide in a different conformation and catalyzes macrocyclization of the N-terminal 8 residues.

In terms of biological role, toxin belonging to the bicyclic octapeptides amatoxins that acts by binding non-competitively to RNA polymerase II and greatly slowing the elongation of transcripts from target promoters. This is Beta-amanitin proprotein from Amanita phalloides (Death cap).